A 28-amino-acid polypeptide reads, in one-letter code: Turritoxin F21-2 (28 aa).

As to expression, expressed by the venom duct.

Its subcellular location is the secreted. In terms of biological role, potent inhibitor of human alpha-3-beta-2 nAChRs (IC(50)=566.2 nM). Irreversibly inhibits the acetylcholine-induced response on human alpha-7/CHRNA7 (55% inhibition at 5.6 uM) and alpha-3-beta-2/CHRNA3-CHRNB2 (91% inhibition) nAChRs. This is Turritoxin F21-2 from Polystira nobilis (Sea snail).